The sequence spans 454 residues: 3-phosphoshikimate 1-carboxyvinyltransferase (454 aa).

3-phosphoshikimate is bound by residues Lys39, Ser40, and Arg44. Lys39 contacts phosphoenolpyruvate. Positions 112 and 140 each coordinate phosphoenolpyruvate. 3-phosphoshikimate is bound by residues Ser185, Gln187, Asp333, and Lys360. Gln187 contributes to the phosphoenolpyruvate binding site. Residue Asp333 is the Proton acceptor of the active site. Arg364 and Arg405 together coordinate phosphoenolpyruvate.

This sequence belongs to the EPSP synthase family. As to quaternary structure, monomer.

It localises to the cytoplasm. The enzyme catalyses 3-phosphoshikimate + phosphoenolpyruvate = 5-O-(1-carboxyvinyl)-3-phosphoshikimate + phosphate. It participates in metabolic intermediate biosynthesis; chorismate biosynthesis; chorismate from D-erythrose 4-phosphate and phosphoenolpyruvate: step 6/7. In terms of biological role, catalyzes the transfer of the enolpyruvyl moiety of phosphoenolpyruvate (PEP) to the 5-hydroxyl of shikimate-3-phosphate (S3P) to produce enolpyruvyl shikimate-3-phosphate and inorganic phosphate. This is 3-phosphoshikimate 1-carboxyvinyltransferase from Xylella fastidiosa (strain 9a5c).